A 453-amino-acid chain; its full sequence is MPFIPHTEEDVAEMLTSIGARSIDELFDEIPAELKTGKLTQVPPGLSEMEISRLMYERAQQDGFYLSFIGAGAYEHHIPAAVWQITTRGEFYSSYTPYQAEASQGTLQLLYEYQTMMASLAGMDVSNASLYDGASALAEAALMAVRQHRTSRRILVPQTVHPVYRSVMRTIVRNQAIEVVEVPYDPATGQVAIDKLDQFAQEEFAALIIPQPNFFGVLEQVDALTDWAHDKQSLAVAVVNPTSLAMLKPPGEWGRRGADIAVGEGQPLGIPLSSGGPYFGFMTCKQELVRQMPGRIIGRTTDLEGKEGFALTLQAREQHIRRSKATSNICTNQGLMVTAATIYMSLLGPEGLYRVAAHSHANTVALVEQLEKLPGVKKAFHSPFFHEAALQLSVPADKVLNRLKAQGVLGGVLLENHYPDLKNTLLVCATETKTAEDLDKYTEVLRQALAASA.

This sequence belongs to the GcvP family. N-terminal subunit subfamily. In terms of assembly, the glycine cleavage system is composed of four proteins: P, T, L and H. In this organism, the P 'protein' is a heterodimer of two subunits.

It carries out the reaction N(6)-[(R)-lipoyl]-L-lysyl-[glycine-cleavage complex H protein] + glycine + H(+) = N(6)-[(R)-S(8)-aminomethyldihydrolipoyl]-L-lysyl-[glycine-cleavage complex H protein] + CO2. Its function is as follows. The glycine cleavage system catalyzes the degradation of glycine. The P protein binds the alpha-amino group of glycine through its pyridoxal phosphate cofactor; CO(2) is released and the remaining methylamine moiety is then transferred to the lipoamide cofactor of the H protein. The sequence is that of Probable glycine dehydrogenase (decarboxylating) subunit 1 from Nitrosomonas europaea (strain ATCC 19718 / CIP 103999 / KCTC 2705 / NBRC 14298).